A 288-amino-acid polypeptide reads, in one-letter code: Polyprenyl transferase eriF (288 aa).

The next 6 membrane-spanning stretches (helical) occupy residues 24–44, 51–71, 101–121, 145–165, 215–235, and 268–288; these read ASIIPGSIFAVGAMRGLTLPL, YIFLVTWLTPYIYFFTLLNQV, IAAFSVFLGVALYEPSLLPET, CIAMATGAWALLSASWKAISP, FIITFLALPAACCILSLGGIF, and FYTYIFCFILMLSSMDSHGLI.

The protein belongs to the UbiA prenyltransferase family. Requires Mg(2+) as cofactor.

Its subcellular location is the membrane. Its function is as follows. Polyprenyl transferase; part of the gene cluster that mediates the biosynthesis of erinacines, cyathane-xylosides that show unique biological activities, including leishmanicidal activity, stimulating activity for nerve growth-factor synthesis, and agonistic activity toward the kappa opioid receptor. The role of eriF within the pathway has still to be determined. The first step of the erinacines biosynthesis pathway is catalyzed by the geranylgeranyl diphosphate (GGPP) synthase eriE via conversion of farnesyl pyrophosphate and isopentyl pyrophosphate into geranylgeranyl pyrophosphate (GGPP). GGPP is then substrate of the diterpene cyclase eriG for the production of cyatha-3,12-diene. The cytochrome P450 monooxygenase eriI then hydroxylates cyatha-3,12-diene at C-14 of the seven-membered ring to produce erinacol, which is further hydroxylated at C-15 by the cytochrome P450 monooxygenase eriC to yield cyathadiol. The cytochrome P450 monooxygenase eriA then catalyzes C-11 hydroxylation in the presence of the short chain dehydrogenase/reductase (SDR) eriH, which leads to the production of cyathatriol. The acetyltransferase eriL converts cyathatriol into 11-O-acetyl-cyathatriol. The SDR eriH catalyzes further oxidation of 11-O-acetyl-cyathatriol into 1-O-acetylcyathin A3. Finally, the glycosyl transferase eriJ tranfers xylose from UDP-xylose onto C-14 of 11-O-acetyl-cyathatriol to form eracine Q. EriJ is also able to convert 11-O-acetyl-cyathatriol to eracine Q2 by using UDP-D-glucose as cosubstrate, but at a lower rate. The chain is Polyprenyl transferase eriF from Hericium erinaceus (Lion's mane mushroom).